The primary structure comprises 1423 residues: Serum albumin SDS-1 (1423 aa).

A signal peptide spans 1–23; that stretch reads MGKAMLKLCITLMVLVFSGTAES. Positions 24-29 are excised as a propeptide; that stretch reads KGVMRR. Albumin domains lie at 29 to 230, 231 to 426, 427 to 608, 609 to 811, 812 to 1031, 1032 to 1226, and 1227 to 1422; these read REDE…EDFK, HKLT…EFKS, EVEK…SDFK, MDVE…SQAR, QEAL…HTIH, MEIR…AIEK, and VIKD…AIKS. Position 36 (histidine 36) interacts with Cu cation. 16 disulfide bridges follow: cysteine 42/cysteine 88, cysteine 87/cysteine 96, cysteine 109/cysteine 125, cysteine 124/cysteine 135, cysteine 167/cysteine 212, cysteine 211/cysteine 221, cysteine 244/cysteine 290, cysteine 289/cysteine 298, cysteine 311/cysteine 327, cysteine 326/cysteine 337, cysteine 363/cysteine 408, cysteine 407/cysteine 416, cysteine 439/cysteine 485, cysteine 484/cysteine 493, cysteine 506/cysteine 522, and cysteine 521/cysteine 532. Asparagine 490 is a glycosylation site (N-linked (GlcNAc...) asparagine). Asparagine 541 carries an N-linked (GlcNAc...) asparagine glycan. Intrachain disulfides connect cysteine 556–cysteine 601, cysteine 622–cysteine 668, cysteine 667–cysteine 676, cysteine 689–cysteine 705, cysteine 704–cysteine 715, cysteine 747–cysteine 792, cysteine 791–cysteine 802, cysteine 825–cysteine 871, cysteine 870–cysteine 879, cysteine 892–cysteine 907, and cysteine 906–cysteine 947. Residue asparagine 652 is glycosylated (N-linked (GlcNAc...) asparagine). A glycan (N-linked (GlcNAc...) asparagine) is linked at asparagine 754. 2 N-linked (GlcNAc...) asparagine glycosylation sites follow: asparagine 908 and asparagine 911. Positions 910–936 are disordered; that stretch reads SNTSTTTSTTTSTTTSTTTSTTTSTTS. Repeat copies occupy residues 913 to 916, 917 to 920, 921 to 924, 925 to 928, 929 to 932, 933 to 935, and 936 to 939. Positions 913–939 are 7 X 4 AA tandem repeats of S-T-T-T; that stretch reads STTTSTTTSTTTSTTTSTTTSTTSTTT. Residue asparagine 954 is glycosylated (N-linked (GlcNAc...) asparagine). Disulfide bonds link cysteine 969–cysteine 1014, cysteine 1013–cysteine 1022, cysteine 1045–cysteine 1091, cysteine 1090–cysteine 1099, cysteine 1112–cysteine 1128, cysteine 1127–cysteine 1138, cysteine 1163–cysteine 1208, and cysteine 1207–cysteine 1216. Residue asparagine 1070 is glycosylated (N-linked (GlcNAc...) asparagine). Asparagine 1236 carries N-linked (GlcNAc...) asparagine glycosylation. Intrachain disulfides connect cysteine 1239–cysteine 1285, cysteine 1284–cysteine 1291, cysteine 1304–cysteine 1320, cysteine 1319–cysteine 1330, cysteine 1359–cysteine 1404, and cysteine 1403–cysteine 1412.

This sequence belongs to the ALB/AFP/VDB family. Plasma.

It is found in the secreted. In terms of biological role, serum albumin, the main protein of plasma, has a good binding capacity for water, Ca(2+), Na(+), K(+), fatty acids, hormones, bilirubin and drugs. Its main function is the regulation of the colloidal osmotic pressure of blood. This chain is Serum albumin SDS-1 (SDS-1), found in Petromyzon marinus (Sea lamprey).